Here is a 152-residue protein sequence, read N- to C-terminus: Deoxyuridine 5'-triphosphate nucleotidohydrolase (152 aa).

Residues 71 to 73 (RSG), Asn-84, 88 to 90 (LID), and Met-98 contribute to the substrate site.

It belongs to the dUTPase family. In terms of assembly, homotrimer. The cofactor is Mg(2+).

The enzyme catalyses dUTP + H2O = dUMP + diphosphate + H(+). It participates in pyrimidine metabolism; dUMP biosynthesis; dUMP from dCTP (dUTP route): step 2/2. This enzyme is involved in nucleotide metabolism: it produces dUMP, the immediate precursor of thymidine nucleotides and it decreases the intracellular concentration of dUTP so that uracil cannot be incorporated into DNA. The protein is Deoxyuridine 5'-triphosphate nucleotidohydrolase of Escherichia coli O1:K1 / APEC.